Here is a 318-residue protein sequence, read N- to C-terminus: MIKLEDVANKAGVSVTTVSRVINRKGYLSDATISKVEKAMQDLHYIPNAAARSLQGKSLKLIGLVFPTIKNIFYAELIEKIEQALFIRGYKAMLATTEHDEQKERDYLALLLSNQVDGIIYGSHNLKAHDYIAIEAPIVAFDRLLTPETTVVSSDNFEGGILATKALINSGSKKIAIFTGNDNTNSPTYLRRDGYLLELERNQLKTHIIKIPSQWTLLRKKVEIKKILENNDFDGVFCTDDLTAILVKDLASNLKKSLNVVGFDGTEFIENYYPNLTTIKQPINDLAELLVDLIIRKIDGDNIDITYQLPVQLHYGID.

The 56-residue stretch at 1–56 (MIKLEDVANKAGVSVTTVSRVINRKGYLSDATISKVEKAMQDLHYIPNAAARSLQG) folds into the HTH lacI-type domain. The H-T-H motif DNA-binding region spans 4–23 (LEDVANKAGVSVTTVSRVIN).

In terms of biological role, this protein may control the expression of the genes that are involved in the transport and catabolism of sucrose. The chain is Sucrose operon repressor (sacR) from Lactococcus lactis subsp. lactis (Streptococcus lactis).